Consider the following 141-residue polypeptide: Nucleoside diphosphate kinase (141 aa).

ATP contacts are provided by Lys-10, Phe-58, Arg-86, Thr-92, Arg-103, and Asn-113. His-116 acts as the Pros-phosphohistidine intermediate in catalysis.

The protein belongs to the NDK family. In terms of assembly, homotetramer. Mg(2+) is required as a cofactor.

It is found in the cytoplasm. It catalyses the reaction a 2'-deoxyribonucleoside 5'-diphosphate + ATP = a 2'-deoxyribonucleoside 5'-triphosphate + ADP. The catalysed reaction is a ribonucleoside 5'-diphosphate + ATP = a ribonucleoside 5'-triphosphate + ADP. In terms of biological role, major role in the synthesis of nucleoside triphosphates other than ATP. The ATP gamma phosphate is transferred to the NDP beta phosphate via a ping-pong mechanism, using a phosphorylated active-site intermediate. The protein is Nucleoside diphosphate kinase of Ehrlichia canis (strain Jake).